Reading from the N-terminus, the 134-residue chain is Cytochrome c-type biogenesis protein CcmE (134 aa).

The Cytoplasmic portion of the chain corresponds to 1–7 (MKRKYRR). The helical; Signal-anchor for type II membrane protein transmembrane segment at 8–28 (LFVVIITLSIFAGSVVLVLGK) threads the bilayer. The Periplasmic portion of the chain corresponds to 29–134 (LKNNVSFFYT…MPNKYKTNDL (106 aa)). Heme is bound by residues histidine 120 and tyrosine 124.

It belongs to the CcmE/CycJ family.

It localises to the cell inner membrane. In terms of biological role, heme chaperone required for the biogenesis of c-type cytochromes. Transiently binds heme delivered by CcmC and transfers the heme to apo-cytochromes in a process facilitated by CcmF and CcmH. This chain is Cytochrome c-type biogenesis protein CcmE, found in Ehrlichia ruminantium (strain Welgevonden).